A 181-amino-acid polypeptide reads, in one-letter code: Protein GrpE (181 aa).

Over residues 1 to 20 the composition is skewed to polar residues; the sequence is MENTQENPASQSAEENGSET. Residues 1 to 39 form a disordered region; that stretch reads MENTQENPASQSAEENGSETQAAQDAAPAAEAADAALAE. The span at 21–39 shows a compositional bias: low complexity; the sequence is QAAQDAAPAAEAADAALAE.

It belongs to the GrpE family. As to quaternary structure, homodimer.

Its subcellular location is the cytoplasm. Its function is as follows. Participates actively in the response to hyperosmotic and heat shock by preventing the aggregation of stress-denatured proteins, in association with DnaK and GrpE. It is the nucleotide exchange factor for DnaK and may function as a thermosensor. Unfolded proteins bind initially to DnaJ; upon interaction with the DnaJ-bound protein, DnaK hydrolyzes its bound ATP, resulting in the formation of a stable complex. GrpE releases ADP from DnaK; ATP binding to DnaK triggers the release of the substrate protein, thus completing the reaction cycle. Several rounds of ATP-dependent interactions between DnaJ, DnaK and GrpE are required for fully efficient folding. This Burkholderia multivorans (strain ATCC 17616 / 249) protein is Protein GrpE.